The sequence spans 367 residues: tRNA-specific 2-thiouridylase MnmA (367 aa).

ATP-binding positions include 9–16 and Phe-35; that span reads LMSGGVDS. Cys-107 functions as the Nucleophile in the catalytic mechanism. Cys-107 and Cys-205 are disulfide-bonded. Position 131 (Gly-131) interacts with ATP. An interaction with tRNA region spans residues 155–157; the sequence is KDQ. Cys-205 (cysteine persulfide intermediate) is an active-site residue.

It belongs to the MnmA/TRMU family.

The protein resides in the cytoplasm. It carries out the reaction S-sulfanyl-L-cysteinyl-[protein] + uridine(34) in tRNA + AH2 + ATP = 2-thiouridine(34) in tRNA + L-cysteinyl-[protein] + A + AMP + diphosphate + H(+). Catalyzes the 2-thiolation of uridine at the wobble position (U34) of tRNA, leading to the formation of s(2)U34. This Petrotoga mobilis (strain DSM 10674 / SJ95) protein is tRNA-specific 2-thiouridylase MnmA.